The chain runs to 231 residues: Large ribosomal subunit protein uL1 (231 aa).

It belongs to the universal ribosomal protein uL1 family. In terms of assembly, part of the 50S ribosomal subunit.

In terms of biological role, binds directly to 23S rRNA. The L1 stalk is quite mobile in the ribosome, and is involved in E site tRNA release. Functionally, protein L1 is also a translational repressor protein, it controls the translation of the L11 operon by binding to its mRNA. This Hydrogenovibrio crunogenus (strain DSM 25203 / XCL-2) (Thiomicrospira crunogena) protein is Large ribosomal subunit protein uL1.